The chain runs to 405 residues: MSASPIADYHAFPDAQGHFGRYGGSFVAETLVGPLQELAQAYDQARQDPAFQLAYDRDLAHYVGRPSPIYHAQRLSDHVGGAQILLKREDLNHTGAHKINNTIGQALLAARMGKKRIIAETGAGQHGVASATVAARLGLECVVYMGATDIERQKINVYRMKLLGATVVPVTSGSATLKDALNEAMRDWVTNVQDTFYIIGTVAGPDPYPRMVRDFNAIVGREAREQMLAEYGRLPDAITACVGGGSNAIGLFHAFLNDRQVEIVGAEAAGDGINTGRHAASIAAGRPGVLHGNRTYVLCDDDGQIIETHSVSAGLDYPGVGPEHAFLADTGRARYLGITDEEALQAFHLLAHTEGILPALESSHALAQAIKLARERPRDQIVLCNLSGRGDKDVHTIAAREGLVL.

At Lys-98 the chain carries N6-(pyridoxal phosphate)lysine.

It belongs to the TrpB family. In terms of assembly, tetramer of two alpha and two beta chains. The cofactor is pyridoxal 5'-phosphate.

It catalyses the reaction (1S,2R)-1-C-(indol-3-yl)glycerol 3-phosphate + L-serine = D-glyceraldehyde 3-phosphate + L-tryptophan + H2O. It participates in amino-acid biosynthesis; L-tryptophan biosynthesis; L-tryptophan from chorismate: step 5/5. Functionally, the beta subunit is responsible for the synthesis of L-tryptophan from indole and L-serine. In Stenotrophomonas maltophilia (strain K279a), this protein is Tryptophan synthase beta chain.